Reading from the N-terminus, the 84-residue chain is MKKGIHPENYRPVVFKDMSNGDVFLSRSTCSTKETIEFEGETYPLVKLEISNTSHPFYTGKSKLVDTAGRVDKFMSRYGNRMKK.

It belongs to the bacterial ribosomal protein bL31 family. Type B subfamily. Part of the 50S ribosomal subunit.

This is Large ribosomal subunit protein bL31B from Phocaeicola vulgatus (strain ATCC 8482 / DSM 1447 / JCM 5826 / CCUG 4940 / NBRC 14291 / NCTC 11154) (Bacteroides vulgatus).